The primary structure comprises 445 residues: Argininosuccinate synthase (445 aa).

Residues Ala17–Ser25 and Ala43 each bind ATP. Tyr99 is a binding site for L-citrulline. The ATP site is built by Gly129 and Thr131. Thr131, Asn135, and Asp136 together coordinate L-aspartate. Residue Asn135 coordinates L-citrulline. Asp136 is an ATP binding site. Arg139 and Ser192 together coordinate L-citrulline. An ATP-binding site is contributed by Asp194. Thr201, Glu203, and Glu280 together coordinate L-citrulline.

Belongs to the argininosuccinate synthase family. Type 2 subfamily. In terms of assembly, homotetramer.

The protein resides in the cytoplasm. The catalysed reaction is L-citrulline + L-aspartate + ATP = 2-(N(omega)-L-arginino)succinate + AMP + diphosphate + H(+). It participates in amino-acid biosynthesis; L-arginine biosynthesis; L-arginine from L-ornithine and carbamoyl phosphate: step 2/3. In Burkholderia ambifaria (strain ATCC BAA-244 / DSM 16087 / CCUG 44356 / LMG 19182 / AMMD) (Burkholderia cepacia (strain AMMD)), this protein is Argininosuccinate synthase.